Here is a 601-residue protein sequence, read N- to C-terminus: ATP-dependent RNA helicase DeaD (601 aa).

The Q motif signature appears at 6–34 (STFSFLGLNPFIIQSLNEMGYVKPSPIQA). The 172-residue stretch at 37-208 (IPLLLEGRDV…KRFMRNPKEI (172 aa)) folds into the Helicase ATP-binding domain. Residue 50–57 (AQTGSGKT) coordinates ATP. The DEAD box motif lies at 156 to 159 (DEAD). The Helicase C-terminal domain maps to 231–378 (KTDALIRFLE…EVQLPKVELL (148 aa)). The span at 552 to 576 (SRHYENKTTHRSIFNKDKNSNRRVS) shows a compositional bias: basic and acidic residues. The segment at 552-601 (SRHYENKTTHRSIFNKDKNSNRRVSDGSFNKSNSPKKTEFKSSFFRRRNV) is disordered.

The protein belongs to the DEAD box helicase family. DeaD/CsdA subfamily.

The protein resides in the cytoplasm. The enzyme catalyses ATP + H2O = ADP + phosphate + H(+). In terms of biological role, DEAD-box RNA helicase involved in various cellular processes at low temperature, including ribosome biogenesis, mRNA degradation and translation initiation. The chain is ATP-dependent RNA helicase DeaD from Buchnera aphidicola subsp. Acyrthosiphon pisum (strain APS) (Acyrthosiphon pisum symbiotic bacterium).